Here is a 3393-residue protein sequence, read N- to C-terminus: Genome polyprotein (3393 aa).

At 1-91 (MVNPKGVNVM…GVSRRKKRRS (91 aa)) the chain is on the cytoplasmic side. Positions 28 to 60 (VSRGLRGFVLFVLTQLFMGRKLTPNVRRLWKSS) are hydrophobic; homodimerization of capsid protein C. The propeptide at 91-108 (SATTSGTVFMAMLGLTLA) is ER anchor for the capsid protein C, removed in mature form by serine protease NS3. Residues 92–112 (ATTSGTVFMAMLGLTLAASVA) form a helical membrane-spanning segment. At 113 to 231 (RHAHHTLINI…FETQVQKVEK (119 aa)) the chain is on the extracellular side. N121 and N137 each carry an N-linked (GlcNAc...) asparagine; by host glycan. Residues 232–252 (WIIRNPTYAIAAILMSWYIGN) form a helical membrane-spanning segment. The Cytoplasmic portion of the chain corresponds to 253–257 (SLKQR). The chain crosses the membrane as a helical span at residues 258 to 272 (VVLLLLTLALGPAYA). At 273-713 (THCVGIPKRD…IHTVFGTAFH (441 aa)) the chain is on the extracellular side. Disulfide bonds link C275–C302, C346–C377, C364–C388, C453–C553, and C570–C600. The fusion peptide stretch occupies residues 370 to 383 (DRGWGNGCGLFGKG). The chain crosses the membrane as a helical span at residues 714 to 734 (GIFGGLSWMTRILIGVLLVWL). Residues 735-745 (GLNSRNGTATT) are Cytoplasmic-facing. A helical transmembrane segment spans residues 746-763 (LMMLTGFIILFLSLGVGA). Topologically, residues 764-1112 (EVGCSVNWGQ…TPEKHLVRSW (349 aa)) are extracellular. 8 disulfides stabilise this stretch: C767–C778, C818–C905, C941–C986, C1043–C1092, C1054–C1075, C1054–C1076, C1075–C1079, and C1076–C1079. N-linked (GlcNAc...) asparagine; by host glycosylation is found at N893 and N970. A helical transmembrane segment spans residues 1113–1133 (VTAGDSYPAWSIGLVAMFLFV). Topologically, residues 1134-1186 (DIMARSRPTRKMMIGGTMLLLAIMIMGELSYLDLLRYIIVVGEHFIERENGGD) are cytoplasmic. Residues 1187 to 1207 (VAYMAIMAASHLRPGLMAMVF) form a helical membrane-spanning segment. Topologically, residues 1208–1283 (AKSMWSPKQR…PVSMPVIRKA (76 aa)) are lumenal. Residues 1284–1304 (SMIIGTGGLLLSLWKGGGSSM) form a helical membrane-spanning segment. At 1305–1341 (RKGLPLFAASAARVLGLTKAHLSVLFILLITKNGKRT) the chain is on the cytoplasmic side. Residues 1342–1362 (WPISECLAAVGIFGAAFGTMF) form a helical membrane-spanning segment. Topologically, residues 1363 to 1365 (SED) are lumenal. A helical membrane pass occupies residues 1366–1386 (ETLLGPLALVGVVLIVYTMFT). At 1387-1438 (QSDGLELVKAADISWSDEAVVSGEARRFDVALNDSGEFKLLDEPPVSWLNVS) the chain is on the cytoplasmic side. Residues 1393–1432 (LVKAADISWSDEAVVSGEARRFDVALNDSGEFKLLDEPPV) are interacts with and activates NS3 protease. Positions 1439-1459 (FLVVAIVASSLHPIALVVTLV) form an intramembrane region, helical. Residues 1460–2137 (AWTYWRTEKR…KLALQQAPEA (678 aa)) lie on the Cytoplasmic side of the membrane. Residues 1470–1649 (SGVLWDVPLA…QPGSVAEVET (180 aa)) form the Peptidase S7 domain. Catalysis depends on charge relay system; for serine protease NS3 activity residues H1521, D1545, and S1606. The 157-residue stretch at 1653-1809 (DKMLRKGEFT…ESNAEIEDVK (157 aa)) folds into the Helicase ATP-binding domain. The segment at 1657–1660 (RKGE) is important for RNA-binding. 1666–1673 (YHPGAGKT) serves as a coordination point for ATP. A DEAH box motif is present at residues 1757–1760 (DEAH). The 181-residue stretch at 1804–1984 (EIEDVKKEIP…VAPLYEEEAS (181 aa)) folds into the Helicase C-terminal domain. The helical transmembrane segment at 2138–2158 (VSTLLLLGMMAICTLGLVILL) threads the bilayer. Over 2159–2168 (MKPKATDKMS) the chain is Lumenal. An intramembrane region (helical) is located at residues 2169-2184 (MAMVTMAITGYLLKLG). A topological domain (lumenal) is located at residue G2185. Residues 2186 to 2206 (MTHAQVGGILLVFFIMMVVII) traverse the membrane as a helical segment. At 2207–2221 (PESGTQRSINDNKLA) the chain is on the cytoplasmic side. A helical transmembrane segment spans residues 2222-2236 (YVIILVGLVIGGVAC). The Lumenal portion of the chain corresponds to 2237-2275 (NELGWLEKTKADLFGNNMTHAQTVVLPTINWNWLDFRPG). The segment at residues 2276-2296 (AAWSLYVGMATFLTPVFVHWI) is an intramembrane region (helical). The Lumenal portion of the chain corresponds to 2297–2344 (KNEYGNASLTGITPTAGILGALNQGVPFVKLNTSVGVLLLSVWNNFTT). A helical transmembrane segment spans residues 2345 to 2365 (SSMLAAMVMLACHCLFVLPGV). The Cytoplasmic portion of the chain corresponds to 2366–2408 (RAQCLREAQIRVFHGVAKNPMVDGNPTVDLEKENDMPDLYEKK). Residues 2409-2429 (LALVALGMAAVLNAAMVRTAL) form a helical membrane-spanning segment. Residues 2430 to 2457 (TTAEMVVLGSAAVGPLLEGNTSAFWNGP) lie on the Lumenal side of the membrane. A helical membrane pass occupies residues 2458-2478 (LAVAVAGVMRGNHYALIGIVY). At 2479–3393 (NLWLLKTARR…QRCSAYGELL (915 aa)) the chain is on the cytoplasmic side. The mRNA cap 0-1 NS5-type MT domain maps to 2489–2753 (GGSSALTYGE…DLIYPTGTRS (265 aa)). S2544 is an S-adenosyl-L-methionine binding site. The residue at position 2544 (S2544) is a Phosphoserine. The active-site For 2'-O-MTase activity is K2549. S-adenosyl-L-methionine-binding residues include G2574, W2575, T2592, L2593, D2619, and I2620. D2634 functions as the For 2'-O-MTase activity in the catalytic mechanism. Residue I2635 coordinates S-adenosyl-L-methionine. Residues K2670 and E2706 each act as for 2'-O-MTase activity in the active site. S-adenosyl-L-methionine is bound at residue Y2708. The Nuclear localization signal signature appears at 2860–2893 (REIMKVVNQWLFDYLGRTKQPRICTKEEFINKVR). 4 residues coordinate Zn(2+): E2927, H2931, C2936, and C2939. Positions 3017-3169 (GLVYADDTAG…APVDESFAGA (153 aa)) constitute a RdRp catalytic domain. Zn(2+)-binding residues include H3204, C3220, and C3339.

This sequence in the N-terminal section; belongs to the class I-like SAM-binding methyltransferase superfamily. mRNA cap 0-1 NS5-type methyltransferase family. In terms of assembly, homodimer. Interacts (via N-terminus) with host EXOC1 (via C-terminus); this interaction results in EXOC1 degradation through the proteasome degradation pathway. As to quaternary structure, forms heterodimers with envelope protein E in the endoplasmic reticulum and Golgi. Homodimer; in the endoplasmic reticulum and Golgi. Interacts with protein prM. Interacts with non-structural protein 1. In terms of assembly, homodimer; Homohexamer when secreted. Interacts with envelope protein E. As to quaternary structure, interacts (via N-terminus) with serine protease NS3. Forms a heterodimer with serine protease NS3. May form homooligomers. In terms of assembly, forms a heterodimer with NS2B. Interacts with non-structural protein 2A (via N-terminus). Interacts with NS4B. Interacts with unphosphorylated RNA-directed RNA polymerase NS5; this interaction stimulates RNA-directed RNA polymerase NS5 guanylyltransferase activity. NS3 interacts with host PDCD6IP; this interaction contributes to virion release. As to quaternary structure, interacts with serine protease NS3. Homodimer. Interacts with host STAT2; this interaction prevents the establishment of cellular antiviral state. Interacts with host TRIM23; this interaction leads to NS5 ubiquitination. Post-translationally, specific enzymatic cleavages in vivo yield mature proteins. The nascent capsid protein C contains a C-terminal hydrophobic domain that act as a signal sequence for translocation of prM into the lumen of the ER. Mature capsid protein C is cleaved at a site upstream of this hydrophobic domain by NS3. prM is cleaved in post-Golgi vesicles by a host furin, releasing the mature small envelope protein M, and peptide pr. Non-structural protein 2A-alpha, a C-terminally truncated form of non-structural protein 2A, results from partial cleavage by NS3. Specific enzymatic cleavages in vivo yield mature proteins peptide 2K acts as a signal sequence and is removed from the N-terminus of NS4B by the host signal peptidase in the ER lumen. Signal cleavage at the 2K-4B site requires a prior NS3 protease-mediated cleavage at the 4A-2K site. In terms of processing, cleaved in post-Golgi vesicles by a host furin, releasing the mature small envelope protein M, and peptide pr. This cleavage is incomplete as up to 30% of viral particles still carry uncleaved prM. N-glycosylated. Post-translationally, N-glycosylated. The excreted form is glycosylated and this is required for efficient secretion of the protein from infected cells. In terms of processing, polyubiquitinated; ubiquitination is probably mediated by host TRIM23 and is prerequisite for NS5-STAT2 interaction. NS5 is not ISGylated or sumoylated. Phosphorylated on serines residues. This phosphorylation may trigger NS5 nuclear localization.

It is found in the virion. It localises to the host nucleus. Its subcellular location is the host cytoplasm. The protein resides in the host perinuclear region. The protein localises to the secreted. It is found in the virion membrane. It localises to the host endoplasmic reticulum membrane. The enzyme catalyses Selective hydrolysis of -Xaa-Xaa-|-Yaa- bonds in which each of the Xaa can be either Arg or Lys and Yaa can be either Ser or Ala.. It catalyses the reaction RNA(n) + a ribonucleoside 5'-triphosphate = RNA(n+1) + diphosphate. The catalysed reaction is a ribonucleoside 5'-triphosphate + H2O = a ribonucleoside 5'-diphosphate + phosphate + H(+). It carries out the reaction ATP + H2O = ADP + phosphate + H(+). The enzyme catalyses a 5'-end (5'-triphosphoguanosine)-ribonucleoside in mRNA + S-adenosyl-L-methionine = a 5'-end (N(7)-methyl 5'-triphosphoguanosine)-ribonucleoside in mRNA + S-adenosyl-L-homocysteine. It catalyses the reaction a 5'-end (N(7)-methyl 5'-triphosphoguanosine)-ribonucleoside in mRNA + S-adenosyl-L-methionine = a 5'-end (N(7)-methyl 5'-triphosphoguanosine)-(2'-O-methyl-ribonucleoside) in mRNA + S-adenosyl-L-homocysteine + H(+). Its function is as follows. Plays a role in virus budding by binding to the cell membrane and gathering the viral RNA into a nucleocapsid that forms the core of a mature virus particle. During virus entry, may induce genome penetration into the host cytoplasm after hemifusion induced by the surface proteins. Can migrate to the cell nucleus where it modulates host functions. Inhibits RNA silencing by interfering with host Dicer. Functionally, prevents premature fusion activity of envelope proteins in trans-Golgi by binding to envelope protein E at pH6.0. After virion release in extracellular space, gets dissociated from E dimers. In terms of biological role, acts as a chaperone for envelope protein E during intracellular virion assembly by masking and inactivating envelope protein E fusion peptide. prM is the only viral peptide matured by host furin in the trans-Golgi network probably to avoid catastrophic activation of the viral fusion activity in acidic Golgi compartment prior to virion release. prM-E cleavage is inefficient, and many virions are only partially matured. These uncleaved prM would play a role in immune evasion. Its function is as follows. May play a role in virus budding. Exerts cytotoxic effects by activating a mitochondrial apoptotic pathway through M ectodomain. May display a viroporin activity. Binds to host cell surface receptor and mediates fusion between viral and cellular membranes. Envelope protein is synthesized in the endoplasmic reticulum in the form of heterodimer with protein prM. They play a role in virion budding in the ER, and the newly formed immature particle is covered with 60 spikes composed of heterodimer between precursor prM and envelope protein E. The virion is transported to the Golgi apparatus where the low pH causes dissociation of PrM-E heterodimers and formation of E homodimers. prM-E cleavage is inefficient, and many virions are only partially matured. These uncleaved prM would play a role in immune evasion. Functionally, involved in immune evasion, pathogenesis and viral replication. Once cleaved off the polyprotein, is targeted to three destinations: the viral replication cycle, the plasma membrane and the extracellular compartment. Essential for viral replication. Required for formation of the replication complex and recruitment of other non-structural proteins to the ER-derived membrane structures. Excreted as a hexameric lipoparticle that plays a role against host immune response. Antagonizing the complement function. Binds to the host macrophages and dendritic cells. Inhibits signal transduction originating from Toll-like receptor 3 (TLR3). In terms of biological role, component of the viral RNA replication complex that functions in virion assembly and antagonizes the host immune response. Its function is as follows. Required cofactor for the serine protease function of NS3. May have membrane-destabilizing activity and form viroporins. Displays three enzymatic activities: serine protease, NTPase and RNA helicase. NS3 serine protease, in association with NS2B, performs its autocleavage and cleaves the polyprotein at dibasic sites in the cytoplasm: C-prM, NS2A-NS2B, NS2B-NS3, NS3-NS4A, NS4A-2K and NS4B-NS5. NS3 RNA helicase binds RNA and unwinds dsRNA in the 3' to 5' direction. Also plays a role in virus assembly. Functionally, regulates the ATPase activity of the NS3 helicase activity. NS4A allows NS3 helicase to conserve energy during unwinding. In terms of biological role, functions as a signal peptide for NS4B and is required for the interferon antagonism activity of the latter. Its function is as follows. Induces the formation of ER-derived membrane vesicles where the viral replication takes place. Inhibits interferon (IFN)-induced host STAT1 phosphorylation and nuclear translocation, thereby preventing the establishment of cellular antiviral state by blocking the IFN-alpha/beta pathway. Replicates the viral (+) and (-) RNA genome, and performs the capping of genomes in the cytoplasm. NS5 methylates viral RNA cap at guanine N-7 and ribose 2'-O positions. Besides its role in RNA genome replication, also prevents the establishment of cellular antiviral state by blocking the interferon-alpha/beta (IFN-alpha/beta) signaling pathway. IFN-I induces binding of NS5 to host IFN-activated transcription factor STAT2, preventing its transcriptional activity. Host TRIM23 is the E3 ligase that interacts with and polyubiquitinates NS5 to promote its binding to STAT2 and trigger IFN-I signaling inhibition. This Banzi virus (BANV) protein is Genome polyprotein.